The sequence spans 252 residues: Flagellar L-ring protein (252 aa).

An N-terminal signal peptide occupies residues 1 to 25; the sequence is MLKLASLNRIVLTGTLLAAAGLASG. Cys-26 carries the N-palmitoyl cysteine lipid modification. The S-diacylglycerol cysteine moiety is linked to residue Cys-26.

Belongs to the FlgH family. As to quaternary structure, the basal body constitutes a major portion of the flagellar organelle and consists of four rings (L,P,S, and M) mounted on a central rod.

The protein localises to the cell outer membrane. Its subcellular location is the bacterial flagellum basal body. Its function is as follows. Assembles around the rod to form the L-ring and probably protects the motor/basal body from shearing forces during rotation. In Nitrobacter winogradskyi (strain ATCC 25391 / DSM 10237 / CIP 104748 / NCIMB 11846 / Nb-255), this protein is Flagellar L-ring protein.